The primary structure comprises 507 residues: Maturase K (507 aa).

This sequence belongs to the intron maturase 2 family. MatK subfamily.

It is found in the plastid. Its subcellular location is the chloroplast. Usually encoded in the trnK tRNA gene intron. Probably assists in splicing its own and other chloroplast group II introns. This chain is Maturase K, found in Fagopyrum esculentum (Common buckwheat).